A 992-amino-acid polypeptide reads, in one-letter code: MPKNSSTTVSSAVEAHAGGLASGPGGARSGERDRIVVQGAREHNLKDVDVSFPRDAMVVFTGLSGSGKSSLAFDTIFAEGQRRYVESLSSYARMFLGRVDKPDVDFIEGLSPAVSIDQKSTNRNPRSTVGTITEIYDYMRLLWARVGVPHCPQCGEPVSRQTPQQIVDQLEELPERTRFQVLAPVVRGRKGEFVDLFRDLSTQGFAVVDGETVQLSDPPVLKKQVKHTIAVVVDRLAMKEGIRQRLTDSVETALKLADGLVVAEFVDVEPVAEKGKKNTAEFGGRDAEGNPRYRSFSEKLSCPNGHEQTVDEIEPRSFSFNNPFGACPECTGIGSRLQVDPDLVVANDELSLREGAVVPWSLGKSTSDYWLRVLGGLGKEMGFSLDTPWKDLTEAERDAVLHGKDFKVEVTFRNRFGRERRYTTGFEGVIPYVMRKHGETESDGARERYESFMREIPCPACHGARLNPTVLNVLVGGLSIADATRLPMREAMEFFSGLRLTDRERQIADQVLKEILARLAFLLDVGLEYLNLERPAGTLSGGEAQRIRLATQIGSGLVGVLYVLDEPSIGLHQRDNRRLIETLLRLRDLGNTLIVVEHDEDTIAEADWIVDIGPRAGEYGGEVVHSGSLADLKANTRSVTGDYLSGRRSIAVPERRRVPEKGRVLTVRGAQENNLKDVSVQVPLGVLTAVTGVSGSGKSTLINEILYKVLANRLNGAKLVPGRHRSVEGLEHLDKVVHVDQSPIGRTPRSNPATYTGVFDAIRKLFAETPEAKVRGYQQGRFSFNIKGGRCEACAGDGTLKIEMNFLPDVYVPCEVCHGARYNRETLEVTYKGKNIAEVLDMPIEEAADFFSAYTRISRYLDTLVDVGLGYVRLGQPATTLSGGEAQRVKLAAELQKRSNGRTIYVLDEPTTGLHFDDIRKLLHVLQSLVDKGNTVLTIEHNLDVIKSADHVIDLGPEGGSGGGTIVATGTPEEVARAAESHTGRFLAELLA.

The segment covering 1–11 (MPKNSSTTVSS) has biased composition (polar residues). Positions 1–30 (MPKNSSTTVSSAVEAHAGGLASGPGGARSG) are disordered. 62 to 69 (GLSGSGKS) contacts ATP. The C4-type; atypical zinc finger occupies 302 to 330 (CPNGHEQTVDEIEPRSFSFNNPFGACPEC). 2 ABC transporter domains span residues 360-639 (WSLG…TRSV) and 659-988 (PEKG…RFLA). 692–699 (GVSGSGKS) serves as a coordination point for ATP. The C4-type zinc-finger motif lies at 791–817 (CEACAGDGTLKIEMNFLPDVYVPCEVC).

The protein belongs to the ABC transporter superfamily. UvrA family. In terms of assembly, forms a heterotetramer with UvrB during the search for lesions.

Its subcellular location is the cytoplasm. The UvrABC repair system catalyzes the recognition and processing of DNA lesions. UvrA is an ATPase and a DNA-binding protein. A damage recognition complex composed of 2 UvrA and 2 UvrB subunits scans DNA for abnormalities. When the presence of a lesion has been verified by UvrB, the UvrA molecules dissociate. This is UvrABC system protein A from Micrococcus luteus (Micrococcus lysodeikticus).